Reading from the N-terminus, the 259-residue chain is MLAKRIIPCLDVTGGRVVKGVNFVELRDAGDPVEIAARYNEQGADELTFLDITATSDGRDLILHIIEAVASQVFIPLTVGGGVRTVEDVRRLLNAGADKTSFNSAALANPQVIEDASAKYGAQCIVVAIDAKRRSEEDARTRGAGWDVYSHGGRKNTGLDAVAWATEMARRGAGEILLTSMDRDGTKSGFDLALTRAVSDAVDVPVIASGGVGNLDHLADGIQLGGADAVLAASIFHYGEYTVQQAKQHMARRGIPVRM.

Residues Asp11 and Asp130 contribute to the active site.

This sequence belongs to the HisA/HisF family. In terms of assembly, heterodimer of HisH and HisF.

The protein localises to the cytoplasm. The enzyme catalyses 5-[(5-phospho-1-deoxy-D-ribulos-1-ylimino)methylamino]-1-(5-phospho-beta-D-ribosyl)imidazole-4-carboxamide + L-glutamine = D-erythro-1-(imidazol-4-yl)glycerol 3-phosphate + 5-amino-1-(5-phospho-beta-D-ribosyl)imidazole-4-carboxamide + L-glutamate + H(+). It participates in amino-acid biosynthesis; L-histidine biosynthesis; L-histidine from 5-phospho-alpha-D-ribose 1-diphosphate: step 5/9. Its function is as follows. IGPS catalyzes the conversion of PRFAR and glutamine to IGP, AICAR and glutamate. The HisF subunit catalyzes the cyclization activity that produces IGP and AICAR from PRFAR using the ammonia provided by the HisH subunit. This chain is Imidazole glycerol phosphate synthase subunit HisF, found in Polaromonas sp. (strain JS666 / ATCC BAA-500).